Consider the following 130-residue polypeptide: Small ribosomal subunit protein uS11 (130 aa).

Residues 109–130 (EDITPIPHDGTGRPGGKRGRRV) are disordered.

Belongs to the universal ribosomal protein uS11 family. Part of the 30S ribosomal subunit.

In terms of biological role, located on the platform of the 30S subunit. The protein is Small ribosomal subunit protein uS11 of Methanobrevibacter smithii (strain ATCC 35061 / DSM 861 / OCM 144 / PS).